A 152-amino-acid polypeptide reads, in one-letter code: Regulatory protein RecX (152 aa).

The protein belongs to the RecX family.

The protein localises to the cytoplasm. In terms of biological role, modulates RecA activity. This chain is Regulatory protein RecX, found in Chromobacterium violaceum (strain ATCC 12472 / DSM 30191 / JCM 1249 / CCUG 213 / NBRC 12614 / NCIMB 9131 / NCTC 9757 / MK).